The following is a 169-amino-acid chain: Cell division inhibitor SulA (169 aa).

The ftsZ binding stretch occupies residues 106 to 112 (ALRTGNY). The lon protease binding stretch occupies residues 162 to 169 (KIHSNLYH).

The protein belongs to the SulA family. As to quaternary structure, interacts with FtsZ. In terms of processing, is rapidly cleaved and degraded by the Lon protease once DNA damage is repaired.

Functionally, component of the SOS system and an inhibitor of cell division. Accumulation of SulA causes rapid cessation of cell division and the appearance of long, non-septate filaments. In the presence of GTP, binds a polymerization-competent form of FtsZ in a 1:1 ratio, thus inhibiting FtsZ polymerization and therefore preventing it from participating in the assembly of the Z ring. This mechanism prevents the premature segregation of damaged DNA to daughter cells during cell division. The sequence is that of Cell division inhibitor SulA from Escherichia fergusonii (strain ATCC 35469 / DSM 13698 / CCUG 18766 / IAM 14443 / JCM 21226 / LMG 7866 / NBRC 102419 / NCTC 12128 / CDC 0568-73).